The following is a 285-amino-acid chain: UPF0173 metal-dependent hydrolase Pnuc_1524 (285 aa).

It belongs to the UPF0173 family.

This Polynucleobacter asymbioticus (strain DSM 18221 / CIP 109841 / QLW-P1DMWA-1) (Polynucleobacter necessarius subsp. asymbioticus) protein is UPF0173 metal-dependent hydrolase Pnuc_1524.